Consider the following 158-residue polypeptide: Major latex protein 22 (158 aa).

This sequence belongs to the MLP family. Laticifer.

Its subcellular location is the vacuole. It localises to the cytoplasmic vesicle. In terms of biological role, not known; MLPs constitute up to 50% of the soluble latex protein. This is Major latex protein 22 (MLP22) from Papaver somniferum (Opium poppy).